A 358-amino-acid polypeptide reads, in one-letter code: HTH-type transcriptional regulator IpsA (358 aa).

One can recognise an HTH lacI-type domain in the interval 8-63; that stretch reads GTLASIAAKLGISRTTVSNAYNRPEQLSAELRQRILDTAEDMGYLGPDPVARSLRT. Residues 10–29 constitute a DNA-binding region (H-T-H motif); sequence LASIAAKLGISRTTVSNAYN.

As to quaternary structure, homodimer.

Its activity is regulated as follows. Myo-inositol causes the dissociation of the IpsA-DNA complex in vitro. Plays a role in the regulation of cell wall biogenesis. Inositol-dependent transcriptional activator of ino1, which encodes inositol phosphate synthase. Also regulates other target genes, which are most likely involved in the synthesis of inositol-derived cell wall components and mycothiol. Acts by binding to a conserved palindromic motif within the promoter regions. The sequence is that of HTH-type transcriptional regulator IpsA from Corynebacterium glutamicum (strain ATCC 13032 / DSM 20300 / JCM 1318 / BCRC 11384 / CCUG 27702 / LMG 3730 / NBRC 12168 / NCIMB 10025 / NRRL B-2784 / 534).